The following is a 478-amino-acid chain: Proline--tRNA ligase (478 aa).

The protein belongs to the class-II aminoacyl-tRNA synthetase family. ProS type 3 subfamily. In terms of assembly, homodimer.

It localises to the cytoplasm. The enzyme catalyses tRNA(Pro) + L-proline + ATP = L-prolyl-tRNA(Pro) + AMP + diphosphate. Catalyzes the attachment of proline to tRNA(Pro) in a two-step reaction: proline is first activated by ATP to form Pro-AMP and then transferred to the acceptor end of tRNA(Pro). This Clostridium botulinum (strain 657 / Type Ba4) protein is Proline--tRNA ligase.